The sequence spans 367 residues: UDP-D-xylose:L-fucose alpha-1,3-D-xylosyltransferase (367 aa).

Residues 1-10 (MAQKQQTLHQ) are compositionally biased toward polar residues. Residues 1–21 (MAQKQQTLHQQRPFSSSPRSY) are disordered. Residues 1-35 (MAQKQQTLHQQRPFSSSPRSYSSISNRPIFLLSRN) lie on the Cytoplasmic side of the membrane. A compositionally biased stretch (low complexity) spans 12–21 (RPFSSSPRSY). A helical; Signal-anchor for type II membrane protein transmembrane segment spans residues 36 to 56 (GLLLVLLALFLLLGVFLPWPG). Over 57–367 (SPLLLFPNKV…ALESPLGKLQ (311 aa)) the chain is Lumenal. N-linked (GlcNAc...) asparagine glycosylation is found at Asn-85, Asn-98, and Asn-173. Positions 196–198 (DVD) match the DXD motif motif. N-linked (GlcNAc...) asparagine glycans are attached at residues Asn-228 and Asn-292.

Belongs to the glycosyltransferase 77 family. It depends on Mn(2+) as a cofactor. Mg(2+) is required as a cofactor. Post-translationally, glycosylated. In terms of tissue distribution, expressed in roots, rosette leaves, stems and flowers.

The protein localises to the golgi apparatus membrane. Catalyzes the transfer of D-xylose from UDP-alpha-D-xylose onto L-fucose. Probably involved in the biosynthesis of rhamnogalacturonan II (RG-II) through xylosylation of the internal fucose moiety of the A-chain of RG-II, a structurally complex pectic polysaccharide of the primary cell wall. RG-II is essential for the cell wall integrity of rapidly growing tissues such as roots and pollen tube growth and elongation. The protein is UDP-D-xylose:L-fucose alpha-1,3-D-xylosyltransferase of Arabidopsis thaliana (Mouse-ear cress).